An 81-amino-acid polypeptide reads, in one-letter code: Photosystem I iron-sulfur center (81 aa).

4Fe-4S ferredoxin-type domains follow at residues 2–31 (AHSVKIYATCIGCTQCVRACPTDVLEMVPW) and 39–68 (IASAPRTEDCVGCKRCESACPTDFLSVRVY). Cys11, Cys14, Cys17, Cys21, Cys48, Cys51, Cys54, and Cys58 together coordinate [4Fe-4S] cluster.

In terms of assembly, the eukaryotic PSI reaction center is composed of at least 11 subunits. It depends on [4Fe-4S] cluster as a cofactor.

Its subcellular location is the plastid. It is found in the chloroplast thylakoid membrane. It carries out the reaction reduced [plastocyanin] + hnu + oxidized [2Fe-2S]-[ferredoxin] = oxidized [plastocyanin] + reduced [2Fe-2S]-[ferredoxin]. Functionally, apoprotein for the two 4Fe-4S centers FA and FB of photosystem I (PSI); essential for photochemical activity. FB is the terminal electron acceptor of PSI, donating electrons to ferredoxin. The C-terminus interacts with PsaA/B/D and helps assemble the protein into the PSI complex. Required for binding of PsaD and PsaE to PSI. PSI is a plastocyanin-ferredoxin oxidoreductase, converting photonic excitation into a charge separation, which transfers an electron from the donor P700 chlorophyll pair to the spectroscopically characterized acceptors A0, A1, FX, FA and FB in turn. This chain is Photosystem I iron-sulfur center, found in Mesostigma viride (Green alga).